A 934-amino-acid polypeptide reads, in one-letter code: 3-hydroxy-3-methylglutaryl-coenzyme A reductase (934 aa).

Over 1–111 (MFYHGASANQ…VLNLVRGAET (111 aa)) the chain is Lumenal. The chain crosses the membrane as a helical span at residues 112–132 (FDIALVTCAYIAMFYTLFNLF). An SSD domain is found at 113–280 (DIALVTCAYI…STFLSAILSL (168 aa)). Over 133–141 (ARMRAVGSK) the chain is Cytoplasmic. The helical transmembrane segment at 142–162 (VWLGLSTLVSSFFAFLFALYI) threads the bilayer. The Lumenal portion of the chain corresponds to 163 to 168 (TTRVLD). Residues 169 to 189 (LSIPFLSLSEGIPFFVAVVGF) traverse the membrane as a helical segment. Over 190–231 (NNKILLAEKVLQNQLNAQSSKNDAPTVLYQALREQGPLLLRD) the chain is Cytoplasmic. Residues 232–252 (HLFMITAFLGCSFYASYLDGL) traverse the membrane as a helical segment. Over 253 to 256 (KNFC) the chain is Lumenal. A helical membrane pass occupies residues 257–277 (ILAALILAFDILTTSTFLSAI). Topologically, residues 278 to 334 (LSLKLEINQIHRSTLLREQLEDDGLTETTVDDVLKSNSLAGTKTFTDAPSTLVTVAK) are cytoplasmic. Residues 335 to 355 (VAGVSVFFGLHFYGFGSAWLS) traverse the membrane as a helical segment. Topologically, residues 356 to 421 (DLSAGNETND…GLISTAARDK (66 aa)) are lumenal. 3 N-linked (GlcNAc...) asparagine glycosylation sites follow: asparagine 361, asparagine 364, and asparagine 382. The helical transmembrane segment at 422–442 (YISKFILFAFAVSASINVYLL) threads the bilayer. Residues 443–934 (NVARIHTTRL…MQHNRAAAKK (492 aa)) are Cytoplasmic-facing. The active-site Charge relay system is the glutamate 618. 624–630 (SAMRGCK) is a CoA binding site. NADP(+) contacts are provided by residues 685–687 (SRF) and 712–720 (DAMGMNMIS). Catalysis depends on lysine 752, which acts as the Charge relay system. 781-783 (VLK) is a binding site for CoA. The active-site Charge relay system is aspartate 828. CoA is bound at residue 923–924 (SH). Histidine 924 serves as the catalytic Proton donor. Position 928–929 (928–929 (NR)) interacts with NADP(+).

This sequence belongs to the HMG-CoA reductase family.

The protein resides in the endoplasmic reticulum membrane. It carries out the reaction (R)-mevalonate + 2 NADP(+) + CoA = (3S)-3-hydroxy-3-methylglutaryl-CoA + 2 NADPH + 2 H(+). Its pathway is metabolic intermediate biosynthesis; (R)-mevalonate biosynthesis; (R)-mevalonate from acetyl-CoA: step 3/3. Functionally, HMG-CoA reductase; part of the first module of ergosterol biosynthesis pathway that includes the early steps of the pathway, conserved across all eukaryotes, and which results in the formation of mevalonate from acetyl-coenzyme A (acetyl-CoA). In this module, the cytosolic acetyl-CoA acetyltransferase catalyzes the formation of acetoacetyl-CoA. The hydroxymethylglutaryl-CoA synthase then condenses acetyl-CoA with acetoacetyl-CoA to form HMG-CoA. The rate-limiting step of the early module is the reduction to mevalonate by the 3-hydroxy-3-methylglutaryl-coenzyme A (HMG-CoA) reductase. This is 3-hydroxy-3-methylglutaryl-coenzyme A reductase from Cyberlindnera jadinii (Torula yeast).